A 290-amino-acid polypeptide reads, in one-letter code: UPF0761 membrane protein Ent638_4092 (290 aa).

Transmembrane regions (helical) follow at residues 44–64 (LLSL…FPMF), 104–124 (VGAC…DSAL), 140–160 (FAVY…SLAI), 183–203 (IFPL…VPTL), 210–230 (AIVG…GFAL), and 244–264 (VLAV…IVLL).

This sequence belongs to the UPF0761 family.

It localises to the cell inner membrane. The sequence is that of UPF0761 membrane protein Ent638_4092 from Enterobacter sp. (strain 638).